Here is a 1241-residue protein sequence, read N- to C-terminus: Intraflagellar transport protein 122 homolog (1241 aa).

4 WD repeats span residues 10 to 50 (KAEH…QPLK), 51 to 91 (GHKD…LKYT), 93 to 129 (NDAI…VSKH), and 131 to 169 (SSSK…KVKI). A disordered region spans residues 222-246 (VYSSQGSEAEEEEPEEEDDSPRDDN). The segment covering 229–242 (EAEEEEPEEEDDSP) has biased composition (acidic residues). WD repeat units follow at residues 278-317 (ALNF…LGTV), 319-359 (EQNS…HGLY), and 512-551 (KQAT…LLFQ).

In terms of assembly, component of the IFT complex A (IFT-A) complex. IFT-A complex is divided into a core subcomplex composed of IFT122:IFT140:WDR19 which is associated with TULP3 and a peripheral subcomplex composed of IFT43:WDR35:TTC21B. Interacts with IFT43:WDR35; the interaction connects the 2 IFT-A subcomplexes. Interacts with IFTAP; the interaction associates IFTAP with IFT-A complex. In terms of tissue distribution, expressed in many tissues. Predominant expression in testis and pituitary.

The protein localises to the cell projection. It localises to the cilium. Its subcellular location is the cytoplasm. The protein resides in the cytoskeleton. It is found in the cilium basal body. Its function is as follows. As a component of the IFT complex A (IFT-A), a complex required for retrograde ciliary transport and entry into cilia of G protein-coupled receptors (GPCRs), it is required in ciliogenesis and ciliary protein trafficking. Involved in cilia formation during neuronal patterning. Acts as a negative regulator of Shh signaling. Required to recruit TULP3 to primary cilia. The chain is Intraflagellar transport protein 122 homolog from Homo sapiens (Human).